The primary structure comprises 330 residues: Phosphate acyltransferase (330 aa).

The protein belongs to the PlsX family. As to quaternary structure, homodimer. Probably interacts with PlsY.

Its subcellular location is the cytoplasm. It catalyses the reaction a fatty acyl-[ACP] + phosphate = an acyl phosphate + holo-[ACP]. Its pathway is lipid metabolism; phospholipid metabolism. In terms of biological role, catalyzes the reversible formation of acyl-phosphate (acyl-PO(4)) from acyl-[acyl-carrier-protein] (acyl-ACP). This enzyme utilizes acyl-ACP as fatty acyl donor, but not acyl-CoA. This chain is Phosphate acyltransferase, found in Bacillus mycoides (strain KBAB4) (Bacillus weihenstephanensis).